The following is a 346-amino-acid chain: CLOCK-interacting pacemaker (346 aa).

Residues 1–42 show a composition bias toward basic and acidic residues; that stretch reads MEKNQKCATEQERFKARSGHGDGQRAEPRKTQTTTESDKDSG. 2 disordered regions span residues 1 to 83 and 167 to 228; these read MEKN…SQPQ and CARK…KELD. The segment covering 50–68 has biased composition (polar residues); the sequence is CLSSVEQTDTEEGPTTSRW. Over residues 179-192 the composition is skewed to basic residues; that stretch reads NQTKRQCSKGHSGS. A compositionally biased stretch (polar residues) spans 205-222; the sequence is GVQQGPVDQNVKESSVSA. Residues 283–315 adopt a coiled-coil conformation; it reads MKTKELARHNQATQSQLEKLQEQVQLYATAMSS.

It localises to the nucleus. The protein localises to the cytoplasm. The protein resides in the cytosol. In terms of biological role, transcriptional repressor which acts as a negative-feedback regulator of CLOCK-BMAL1 transcriptional activity in the circadian-clock mechanism. The physiological relevance of these observations is unsure. The chain is CLOCK-interacting pacemaker (cipc) from Xenopus laevis (African clawed frog).